We begin with the raw amino-acid sequence, 470 residues long: Aminoacyl transferase sphA (470 aa).

Pyridoxal 5'-phosphate is bound by residues serine 212, histidine 244, and threonine 272. At lysine 275 the chain carries N6-(pyridoxal phosphate)lysine.

The protein belongs to the class-II pyridoxal-phosphate-dependent aminotransferase family. BioF subfamily. Homodimer. It depends on pyridoxal 5'-phosphate as a cofactor.

The protein operates within secondary metabolite biosynthesis. In terms of biological role, aminoacyl transferase; part of the gene cluster that mediates the biosynthesis of sphingofungins, bioactive molecules acting as sphingolipid inhibitors via inhibiting serine palmitoyl transferase (SPT). Within the pathway, sphA transfers 2-methyl-aminomalonate and 2-hydroxymethyl-aminomalonate onto the sphB product 3-hydroxyoctadeca-4,10-dienoyl-ACP to produce the precursors of sphingofungins E and F. The substrate specificity of sphA using 2-methyl-aminomalonate and 2-hydroxymethyl-aminomalonate instread of aminomalonate is responsible for the biosynthesis of sphingofungins E and F but not B and C like in Aspergillus fumigatus. The PKS sphB does not contain any putative thioesterase domain for releasing the nascent polyketide chain and it has been suggested that aminoacyl transferases can facilitate the polyketide chain release. The protein is Aminoacyl transferase sphA of Byssochlamys spectabilis (Paecilomyces variotii).